Here is a 271-residue protein sequence, read N- to C-terminus: Tryptophan synthase alpha chain (271 aa).

Active-site proton acceptor residues include glutamate 49 and aspartate 60.

The protein belongs to the TrpA family. As to quaternary structure, tetramer of two alpha and two beta chains.

It carries out the reaction (1S,2R)-1-C-(indol-3-yl)glycerol 3-phosphate + L-serine = D-glyceraldehyde 3-phosphate + L-tryptophan + H2O. It functions in the pathway amino-acid biosynthesis; L-tryptophan biosynthesis; L-tryptophan from chorismate: step 5/5. The alpha subunit is responsible for the aldol cleavage of indoleglycerol phosphate to indole and glyceraldehyde 3-phosphate. The protein is Tryptophan synthase alpha chain of Leptothrix cholodnii (strain ATCC 51168 / LMG 8142 / SP-6) (Leptothrix discophora (strain SP-6)).